Consider the following 118-residue polypeptide: Small ribosomal subunit protein uS13 (118 aa).

A disordered region spans residues 94-118 (SLPLRGQRTKTNARTRKGPRKPIKR).

This sequence belongs to the universal ribosomal protein uS13 family. Part of the 30S ribosomal subunit. Forms a loose heterodimer with protein S19. Forms two bridges to the 50S subunit in the 70S ribosome.

Located at the top of the head of the 30S subunit, it contacts several helices of the 16S rRNA. In the 70S ribosome it contacts the 23S rRNA (bridge B1a) and protein L5 of the 50S subunit (bridge B1b), connecting the 2 subunits; these bridges are implicated in subunit movement. Contacts the tRNAs in the A and P-sites. The polypeptide is Small ribosomal subunit protein uS13 (Photobacterium profundum (strain SS9)).